The sequence spans 122 residues: Fluoride-specific ion channel FluC 2 (122 aa).

Transmembrane regions (helical) follow at residues 4 to 24, 38 to 58, 63 to 83, and 96 to 116; these read VAVW…RFVV, LGTL…GGLA, AALL…TWML, and AALA…FIGQ. Na(+) is bound by residues Gly73 and Thr76.

This sequence belongs to the fluoride channel Fluc/FEX (TC 1.A.43) family.

The protein resides in the cell membrane. The catalysed reaction is fluoride(in) = fluoride(out). Its activity is regulated as follows. Na(+) is not transported, but it plays an essential structural role and its presence is essential for fluoride channel function. Fluoride-specific ion channel. Important for reducing fluoride concentration in the cell, thus reducing its toxicity. This chain is Fluoride-specific ion channel FluC 2, found in Mycolicibacterium paratuberculosis (strain ATCC BAA-968 / K-10) (Mycobacterium paratuberculosis).